Consider the following 336-residue polypeptide: DNA repair protein RAD51 homolog B (336 aa).

A HhH domain is found at 45-74 (TVEAVAYAPKKELLNIKGISEAKAEKILAE). 124-131 (GEFRTGKT) serves as a coordination point for ATP. Residues 242 to 257 (LARFLRMLLRLADEFG) carry the Nuclear export signal motif.

This sequence belongs to the RecA family. RAD51 subfamily. In terms of assembly, forms linear homooligomers, giving rise to a RAD51 nucleoprotein filament, which is essential for strand-pairing reactions during DNA recombination.

The protein localises to the nucleus. It localises to the cytoplasm. It is found in the chromosome. Plays an important role in homologous strand exchange, a key step in DNA repair through homologous recombination (HR). Binds to single-stranded DNA in an ATP-dependent manner to form nucleoprotein filaments which are essential for the homology search and strand exchange. Catalyzes the recognition of homology and strand exchange between homologous DNA partners to form a joint molecule between a processed DNA break and the repair template. Recruited to resolve stalled replication forks during replication stress. Also involved in interstrand cross-link repair. The chain is DNA repair protein RAD51 homolog B (rad51-b) from Xenopus laevis (African clawed frog).